The chain runs to 61 residues: Large ribosomal subunit protein bL28 (61 aa).

A disordered region spans residues 1 to 26; it reads MAKDFINGKRTQFGNKRSHALNSSRR. Polar residues predominate over residues 9–25; the sequence is KRTQFGNKRSHALNSSR.

The protein belongs to the bacterial ribosomal protein bL28 family.

The sequence is that of Large ribosomal subunit protein bL28 from Limosilactobacillus reuteri (strain DSM 20016) (Lactobacillus reuteri).